A 218-amino-acid chain; its full sequence is 2-C-methyl-D-erythritol 4-phosphate cytidylyltransferase (218 aa).

This sequence belongs to the IspD/TarI cytidylyltransferase family. IspD subfamily.

It carries out the reaction 2-C-methyl-D-erythritol 4-phosphate + CTP + H(+) = 4-CDP-2-C-methyl-D-erythritol + diphosphate. Its pathway is isoprenoid biosynthesis; isopentenyl diphosphate biosynthesis via DXP pathway; isopentenyl diphosphate from 1-deoxy-D-xylulose 5-phosphate: step 2/6. Functionally, catalyzes the formation of 4-diphosphocytidyl-2-C-methyl-D-erythritol from CTP and 2-C-methyl-D-erythritol 4-phosphate (MEP). The chain is 2-C-methyl-D-erythritol 4-phosphate cytidylyltransferase from Chlamydia muridarum (strain MoPn / Nigg).